Reading from the N-terminus, the 452-residue chain is Bifunctional protein GlmU (452 aa).

The pyrophosphorylase stretch occupies residues 1 to 233; the sequence is MTDRPFAALI…AWEVAGVNSR (233 aa). UDP-N-acetyl-alpha-D-glucosamine is bound by residues 11-14, lysine 25, glutamine 76, 81-82, 104-106, glycine 144, glutamate 159, asparagine 174, and asparagine 231; these read LAAG, GT, and YGD. Aspartate 106 serves as a coordination point for Mg(2+). Mg(2+) is bound at residue asparagine 231. The interval 234–254 is linker; it reads AELAAVEAEWQRRRRLAAMAD. Residues 255 to 452 form an N-acetyltransferase region; it reads GATLIAPETV…AMKIKKAARK (198 aa). UDP-N-acetyl-alpha-D-glucosamine-binding residues include arginine 320 and lysine 338. Histidine 350 (proton acceptor) is an active-site residue. Tyrosine 353 and asparagine 364 together coordinate UDP-N-acetyl-alpha-D-glucosamine. Acetyl-CoA contacts are provided by residues alanine 367, 373–374, serine 392, alanine 410, and arginine 427; that span reads NY.

It in the N-terminal section; belongs to the N-acetylglucosamine-1-phosphate uridyltransferase family. In the C-terminal section; belongs to the transferase hexapeptide repeat family. Homotrimer. It depends on Mg(2+) as a cofactor.

Its subcellular location is the cytoplasm. It carries out the reaction alpha-D-glucosamine 1-phosphate + acetyl-CoA = N-acetyl-alpha-D-glucosamine 1-phosphate + CoA + H(+). The catalysed reaction is N-acetyl-alpha-D-glucosamine 1-phosphate + UTP + H(+) = UDP-N-acetyl-alpha-D-glucosamine + diphosphate. It functions in the pathway nucleotide-sugar biosynthesis; UDP-N-acetyl-alpha-D-glucosamine biosynthesis; N-acetyl-alpha-D-glucosamine 1-phosphate from alpha-D-glucosamine 6-phosphate (route II): step 2/2. Its pathway is nucleotide-sugar biosynthesis; UDP-N-acetyl-alpha-D-glucosamine biosynthesis; UDP-N-acetyl-alpha-D-glucosamine from N-acetyl-alpha-D-glucosamine 1-phosphate: step 1/1. The protein operates within bacterial outer membrane biogenesis; LPS lipid A biosynthesis. In terms of biological role, catalyzes the last two sequential reactions in the de novo biosynthetic pathway for UDP-N-acetylglucosamine (UDP-GlcNAc). The C-terminal domain catalyzes the transfer of acetyl group from acetyl coenzyme A to glucosamine-1-phosphate (GlcN-1-P) to produce N-acetylglucosamine-1-phosphate (GlcNAc-1-P), which is converted into UDP-GlcNAc by the transfer of uridine 5-monophosphate (from uridine 5-triphosphate), a reaction catalyzed by the N-terminal domain. The chain is Bifunctional protein GlmU from Rhizorhabdus wittichii (strain DSM 6014 / CCUG 31198 / JCM 15750 / NBRC 105917 / EY 4224 / RW1) (Sphingomonas wittichii).